A 303-amino-acid polypeptide reads, in one-letter code: MTEQASISNHDVAGWRDYLELTKPNVVALMLLTSLIGMLLAVPGMVPIDILILGNLGIALCAGSAAAVNHLVDRKVDLKMARTFNRPIAKGRIDPTKAILFAAILGLAGMAILMVWVNHLTAWLTLASLVGYAFIYTFWLKRATPQNIVIGGLAGAAPPLLGWVAVTGEVHGHALLLVLIIFAWTPPHFWALAVHRKEEYANAKIPMLPVTHGEAYTKIQILLYTFILIAVTLLPYATHMLNELYLLGAVVLGIGFLYYAVAMMRNKNKNAGMDAFKYSIVYLMALFVVMLLDHYLLPTNIVS.

9 consecutive transmembrane segments (helical) span residues 26–46 (VVAL…PGMV), 48–68 (IDIL…AAAV), 98–118 (AILF…VWVN), 120–140 (LTAW…TFWL), 148–168 (IVIG…AVTG), 174–194 (ALLL…ALAV), 221–241 (ILLY…THML), 244–264 (LYLL…VAMM), and 278–298 (YSIV…YLLP).

This sequence belongs to the UbiA prenyltransferase family. Protoheme IX farnesyltransferase subfamily.

It is found in the cell inner membrane. The enzyme catalyses heme b + (2E,6E)-farnesyl diphosphate + H2O = Fe(II)-heme o + diphosphate. Its pathway is porphyrin-containing compound metabolism; heme O biosynthesis; heme O from protoheme: step 1/1. Converts heme B (protoheme IX) to heme O by substitution of the vinyl group on carbon 2 of heme B porphyrin ring with a hydroxyethyl farnesyl side group. The protein is Protoheme IX farnesyltransferase of Saccharophagus degradans (strain 2-40 / ATCC 43961 / DSM 17024).